The following is a 325-amino-acid chain: Beta-ketoacyl-[acyl-carrier-protein] synthase III (325 aa).

Catalysis depends on residues Cys-119 and His-252. Residues 253 to 257 form an ACP-binding region; it reads QANIR. The active site involves Asn-282.

Belongs to the thiolase-like superfamily. FabH family. As to quaternary structure, homodimer.

Its subcellular location is the cytoplasm. It catalyses the reaction malonyl-[ACP] + acetyl-CoA + H(+) = 3-oxobutanoyl-[ACP] + CO2 + CoA. Its pathway is lipid metabolism; fatty acid biosynthesis. Functionally, catalyzes the condensation reaction of fatty acid synthesis by the addition to an acyl acceptor of two carbons from malonyl-ACP. Catalyzes the first condensation reaction which initiates fatty acid synthesis and may therefore play a role in governing the total rate of fatty acid production. Possesses both acetoacetyl-ACP synthase and acetyl transacylase activities. Its substrate specificity determines the biosynthesis of branched-chain and/or straight-chain of fatty acids. This chain is Beta-ketoacyl-[acyl-carrier-protein] synthase III, found in Verminephrobacter eiseniae (strain EF01-2).